The sequence spans 566 residues: DDB1- and CUL4-associated factor 10 (566 aa).

Disordered regions lie at residues Met-1–Ala-72 and Thr-87–Leu-123. Residues Ser-50, Ser-57, Ser-67, Ser-96, Ser-99, and Ser-100 each carry the phosphoserine modification. A compositionally biased stretch (low complexity) spans Thr-87 to Ser-100. Arg-141 is modified (omega-N-methylarginine). 4 WD repeats span residues Arg-173–Thr-212, Ala-216–Cys-254, Gly-258–Cys-297, and Phe-303–Glu-342. Over residues Thr-354–Ser-374 the composition is skewed to low complexity. The segment at Thr-354 to Glu-413 is disordered. Position 356 is a phosphoserine (Ser-356). Over residues His-377–Met-388 the composition is skewed to basic and acidic residues. WD repeat units follow at residues Asp-415 to Ala-455, Val-477 to Val-515, and Ser-533 to Phe-566.

Belongs to the WD repeat DCAF10 family. In terms of assembly, interacts with DDB1.

The protein operates within protein modification; protein ubiquitination. May function as a substrate receptor for CUL4-DDB1 E3 ubiquitin-protein ligase complex. The chain is DDB1- and CUL4-associated factor 10 (Dcaf10) from Mus musculus (Mouse).